The following is a 340-amino-acid chain: Peroxisomal coenzyme A diphosphatase 1, peroxisomal (340 aa).

The transit peptide at 1–7 directs the protein to the peroxisome; that stretch reads MILSQRR. The 163-residue stretch at 37–199 folds into the Nudix hydrolase domain; it reads KRNSAVIILL…DEDVKSYQAE (163 aa). Residues 77–99 carry the Nudix box motif; sequence GKADYFQETFESVARREAEEEIG. Mg(2+) contacts are provided by glutamate 93 and glutamate 97.

Belongs to the Nudix hydrolase family. PCD1 subfamily. Mn(2+) is required as a cofactor. Mg(2+) serves as cofactor. Post-translationally, the size of the cleaved transit peptide can be of 7 or 8 residues.

It is found in the peroxisome. It catalyses the reaction CoA + H2O = (R)-4'-phosphopantetheine + adenosine 3',5'-bisphosphate + 2 H(+). It carries out the reaction CoA-disulfide + H2O = 4'-phosphopantetheinyl-CoA disulfide + adenosine 3',5'-bisphosphate + 2 H(+). The enzyme catalyses 8-oxo-dGTP + H2O = 8-oxo-dGMP + diphosphate + H(+). The catalysed reaction is 2-oxo-dATP + H2O = 2-oxo-dAMP + diphosphate + H(+). In terms of biological role, diphosphatase (pyrophosphatase) with specificity for coenzyme A and CoA derivatives. Catalyzes the hydrolysis of the diphosphate linkage in CoA to give 3',5'-ADP and 4'-phosphopantetheine. Prefers oxidized CoA disulfide (CoASSCoA) over CoA as a substrate. May be required to remove potentially toxic oxidized CoA disulfide from peroxisomes to maintain the capacity for beta-oxidation of fatty acids. Can also hydrolyze 8-oxo-dGTP and 2-OH-dATP in vitro; therefore it may function as a sanitizing enzyme for oxidized nucleotides and may contribute to prevention of spontaneous mutagenesis due to the misincorporation of these oxidized nucleotides during DNA synthesis. Shows moderate activity in vitro with several short chain acyl-CoA esters and very low activity on 3'-dephospho-CoA while is not active with (deoxy)nucleoside 5'-triphosphates, nucleoside 5'-di- or monophosphates, diadenosine polyphosphates, nucleoside 5'-diphosphosugars, cytidine 5'-diphosphoalcohols, NAD(+), NADH, or FAD. This chain is Peroxisomal coenzyme A diphosphatase 1, peroxisomal (PCD1), found in Saccharomyces cerevisiae (strain ATCC 204508 / S288c) (Baker's yeast).